Here is a 230-residue protein sequence, read N- to C-terminus: Ureidoacrylate amidohydrolase RutB (230 aa).

The active-site Proton acceptor is D24. Residue K133 is part of the active site. The active-site Nucleophile is C166.

The protein belongs to the isochorismatase family. RutB subfamily.

It catalyses the reaction (Z)-3-ureidoacrylate + H2O + H(+) = (Z)-3-aminoacrylate + NH4(+) + CO2. The catalysed reaction is (Z)-3-ureidoacrylate + H2O = (Z)-3-aminoacrylate + carbamate + H(+). The enzyme catalyses (Z)-2-methylureidoacrylate + H2O + H(+) = (Z)-2-methylaminoacrylate + NH4(+) + CO2. Hydrolyzes ureidoacrylate to form aminoacrylate and carbamate. The carbamate hydrolyzes spontaneously, thereby releasing one of the nitrogen atoms of the pyrimidine ring as ammonia and one of its carbon atoms as CO2. This chain is Ureidoacrylate amidohydrolase RutB, found in Escherichia coli O44:H18 (strain 042 / EAEC).